The following is a 263-amino-acid chain: Meiotic drive suppressor wtf6 (263 aa).

The disordered stretch occupies residues 1–68; that stretch reads MKNNYTSLKS…REKNPSRSTD (68 aa). Positions 19-30 are enriched in basic and acidic residues; that stretch reads KTDHEIDLEKGP. 3 helical membrane passes run 73 to 93, 110 to 130, and 201 to 221; these read FLIKLLISFTSIILFNAPAVC, WTLFGFWCLVCTLALISLTYF, and SASAFTFMAVSSILIFIAETV.

Belongs to the WTF family. In terms of assembly, homomer. Interacts with other proteins that exhibit high sequence similarity.

The protein resides in the spore membrane. It localises to the vacuole membrane. Its function is as follows. Acts as a suppressor component of the dual wtf meiotic drive system, and can suppress but not confer meiotic drive by compatible poisons. Wtf meiotic drive systems promote unequal transmission of alleles from the parental zygote to progeny spores by encoding a poison and an antidote from the same locus; the poison is trans-acting and forms toxic aggregates in all spores within an ascus, wherease the antidote is spore-specific and targets aggregates for degradation by the vacuole. Meiotic drive by wtf systems therefore lead to poisoning of all progeny that do not inherit the dual poison/antidote allele, or express a compatible antidote. This chain is Meiotic drive suppressor wtf6, found in Schizosaccharomyces kambucha (Fission yeast).